The chain runs to 530 residues: MDFKYSDTVIHNGVVFYITDGGHRVYFLYGGCLLSVPRPHATAESGEIAKFGLTLRGLTHNDRVVANYVRSELNRTGRHESAPSSEEDVFVDRLEVLAQGAQAFGRDICGSFDLEVYDPYLAECMVSLKVTSGLIVSTGRDIPQDGMLHLYTVPTITNASSGFIYTPNIACFTLVQAYLTELPPELETLISGLFDRIPVARPPLRDESGGHSRTDIIVTSPRAVKTMAIGGTTRCSKRPLRKTVVSDFVQVRLIPKPCSIWDSASRVASGASLQSLQLLFKIADEIILIEEPWPGLDEHLNQARSTIVDAILAVYGNEGKLRFFGGKLTQQGVTTLQRFVLCQFILGKWNLINCYAALEQLAESYIGAVPEARDPLPDPHLVADAVNEIIRESGILGELCEIIVRYTQPTDPVNGSGSEVVELEARLLAEFAANATRVELGLSSYDEVRNMEARIASVLNKLYAKDGIGGAAQVACRILGSGLPVAIVLNVSSITAFDGLDLSRKGAYYLYYLLSERLKRGGVTVHVSRK.

This sequence belongs to the alphaherpesvirinae UL21 protein family. Interacts (via C-terminus) with UL16.

It localises to the virion tegument. The protein resides in the host cytoplasm. The protein localises to the host nucleus. Functionally, may participate in DNA packaging/capsid maturation events. Promotes efficient incorporation of tegument proteins UL46, UL49, and US3 homologs into virions. May also play a role in capsid transport to the trans-Golgi network (TGN). The sequence is that of Tegument protein UL21 homolog from Equus caballus (Horse).